The sequence spans 455 residues: Golgi pH regulator A (455 aa).

5 consecutive transmembrane segments (helical) span residues 5–25, 46–66, 79–99, 114–134, and 150–170; these read IDSS…WLFF, VTFA…LGVL, LCVI…YFIV, CLLW…FPIL, and VGVI…VNCP. N-linked (GlcNAc...) asparagine glycans are attached at residues N180 and N243. A run of 4 helical transmembrane segments spans residues 290–310, 343–363, 378–398, and 425–445; these read GYFF…NIVF, ISFI…LITL, VIVL…VLLI, and WFDV…YLAH.

Belongs to the Golgi pH regulator (TC 1.A.38) family. Homotrimer. Interacts with RABL3; the interaction stabilizes GPR89A. Ubiquitous.

It localises to the golgi apparatus membrane. The enzyme catalyses iodide(out) = iodide(in). It catalyses the reaction chloride(in) = chloride(out). The catalysed reaction is bromide(in) = bromide(out). It carries out the reaction fluoride(in) = fluoride(out). Voltage-gated channel that enables the transfer of monoatomic anions such as iodide, chloride, bromide and fluoride which may function in counter-ion conductance and participates in Golgi acidification. Plays a role in lymphocyte development, probably by acting as a RABL3 effector in hematopoietic cells. The chain is Golgi pH regulator A from Homo sapiens (Human).